The sequence spans 330 residues: Complement factor H-related protein 3 (330 aa).

The N-terminal stretch at 1 to 18 is a signal peptide; it reads MLLLINVILTLWVSCANG. 5 Sushi domains span residues 22-84, 85-142, 144-205, 208-266, and 267-330; these read PCDF…VPCL, RKCY…RCIR, RTCS…ICIN, EKCG…RCIH, and PCII…PRCE. Intrachain disulfides connect Cys23-Cys72, Cys55-Cys83, Cys87-Cys129, Cys114-Cys140, Cys146-Cys192, and Cys175-Cys203. An N-linked (GlcNAc...) asparagine glycan is attached at Asn108. N-linked (GlcNAc...) asparagine glycans are attached at residues Asn185 and Asn205. Disulfide bonds link Cys210/Cys253, Cys239/Cys264, Cys268/Cys319, and Cys302/Cys329. N-linked (GlcNAc...) asparagine glycosylation occurs at Asn309.

In terms of tissue distribution, expressed by the liver and secreted in plasma.

Its subcellular location is the secreted. Might be involved in complement regulation. The chain is Complement factor H-related protein 3 (CFHR3) from Homo sapiens (Human).